Here is a 94-residue protein sequence, read N- to C-terminus: Acylphosphatase (94 aa).

The Acylphosphatase-like domain occupies 6–92 (RVHVWIRGRV…EGLPTFEIRP (87 aa)). Catalysis depends on residues arginine 21 and asparagine 39.

This sequence belongs to the acylphosphatase family.

It catalyses the reaction an acyl phosphate + H2O = a carboxylate + phosphate + H(+). The sequence is that of Acylphosphatase (acyP) from Synechococcus sp. (strain JA-2-3B'a(2-13)) (Cyanobacteria bacterium Yellowstone B-Prime).